We begin with the raw amino-acid sequence, 2462 residues long: Serine/threonine-protein kinase Wnk (2462 aa).

3 disordered regions span residues 18–133 (NRAR…ASKS), 146–248 (NTLP…KSSS), and 365–461 (EDDV…DDDP). Polar residues-rich tracts occupy residues 29 to 58 (DGTTSCTTQPQRNTSISSEEQTVQGANIQK) and 65 to 78 (NRSASSRQKPNPTS). The segment covering 94–124 (TLSAHTSTSSTTSIQSSPIEPASSLPTLNTT) has biased composition (low complexity). A compositionally biased stretch (polar residues) spans 146 to 155 (NTLPGKTASS). 3 stretches are compositionally biased toward basic and acidic residues: residues 190-205 (QSREQNEDEMDSKIEP), 237-247 (DTKKMEARKSS), and 396-413 (QSEKQAKSFDDITKKAES). Low complexity predominate over residues 414 to 452 (SEASAEEAAVTGSSTDASASPLPSTSLVSTTSSATSITK). Residues 471–729 (FKYDKEVGRG…CNELLESEFF (259 aa)) enclose the Protein kinase domain. Residues Ser-481, 551 to 554 (TELM), and Lys-601 each bind ATP. Asp-618 functions as the Proton acceptor in the catalytic mechanism. Phosphoserine; by autocatalysis occurs at positions 628 and 632. Disordered stretches follow at residues 844-873 (LQKQRESLPTNVDEDEEEEEESEDEEDGVK), 893-923 (LALSTNSVEPQQLSTRSNTSIPNSGIQQPVQ), and 1006-1055 (PQQQ…LQQQ). Positions 855 to 870 (VDEDEEEEEESEDEED) are enriched in acidic residues. Positions 893–918 (LALSTNSVEPQQLSTRSNTSIPNSGI) are enriched in polar residues. Low complexity-rich tracts occupy residues 1006-1034 (PQQQVNQQQQQPQMMQQIPQQVQVQQPQT) and 1041-1055 (HEQQPQQQQQPLQQQ). The stretch at 1142 to 1178 (AQHQLQQLQQQQLQQQQLQQQQQIQQQQLQQQQLQQQ) forms a coiled coil. Over residues 1236–1251 (QGGQVTLSDAQQQQHP) the composition is skewed to polar residues. Disordered regions lie at residues 1236–1256 (QGGQVTLSDAQQQQHPGFSAV), 1322–1382 (QQQQ…EQIS), 1418–1465 (GALE…PKLS), 1554–1578 (LTRQRSTFRSHQRHRSRDETASDIT), 1615–1699 (NIPN…KDKK), 1762–1790 (DTSENAQQATEAEAEKPKDKSGQAVGNQG), 1828–1895 (QASP…SVGS), 1929–1966 (HEKQLSKQPSLEKPSATSILTNNSDPPQRNPSNGSINQ), and 2122–2229 (THVQ…FIQS). The segment covering 1559-1568 (STFRSHQRHR) has biased composition (basic residues). Over residues 1627 to 1641 (STPPTTTSTMSSSST) the composition is skewed to low complexity. A compositionally biased stretch (polar residues) spans 1642-1674 (ASRDAPNSSNDVTIGSGSVSRKTSTASEYTSLS). 3 stretches are compositionally biased toward polar residues: residues 1828–1852 (QASPAMSSLKATSGQPQTQEITKPN), 1861–1894 (SVGQNTPTAALTSARGSGSSVYNSRRTSIDNSVG), and 1943–1966 (SATSILTNNSDPPQRNPSNGSINQ). Positions 2125–2136 (QQPSNLQPQQQS) are enriched in low complexity. Polar residues predominate over residues 2137–2160 (VHPNMTQQPQQTPLNGHPSMVNTL). Low complexity predominate over residues 2161–2211 (QQQPPQQSLPMQTIQSQQQQHNQMPIISQQQQQQILMQQQQQQGSQQGSQQ). Polar residues predominate over residues 2212-2229 (FNLPGTQQTHPQHQFIQS).

The protein belongs to the protein kinase superfamily. Ser/Thr protein kinase family. WNK subfamily. Requires Mg(2+) as cofactor. In terms of processing, autophosphorylated. Autophosphorylation at Ser-628 and Ser-632 promotes its activity.

The protein resides in the cytoplasm. The enzyme catalyses L-seryl-[protein] + ATP = O-phospho-L-seryl-[protein] + ADP + H(+). It catalyses the reaction L-threonyl-[protein] + ATP = O-phospho-L-threonyl-[protein] + ADP + H(+). Its activity is regulated as follows. Activated in response to hyperosmotic stress: cell shrinkage promotes formation of a membraneless compartment that concentrates wnk-1 with its downstrem substrates. Activation requires autophosphorylation. Autophosphorylation and subsequent activation is inhibited by increases in intracellular Cl(-) or K(+). Functionally, serine/threonine-protein kinase component of the WNK-SPAK/OSR1 kinase cascade, which plays an important role in the regulation of electrolyte homeostasis and regulatory volume increase in response to hyperosmotic stress. Wnk mediates regulatory volume increase in response to hyperosmotic stress by acting as a molecular crowding sensor, which senses cell shrinkage and mediates formation of a membraneless compartment by undergoing liquid-liquid phase separation. The membraneless compartment concentrates Wnk with its substrate Fray, promoting Wnk-dependent phosphorylation and activation of downstream kinase Fray. Following activation, Fray catalyzes phosphorylation of ion cotransporters Ncc69 and Irk1, regulating their activity. Phosphorylation of Na-K-Cl cotransporter Ncc69 promotes its activation and ion influx. Involved in circadian rhythms in small ventral lateral (sLNv) pacemaker neurons: in the morning, Wnk activity is repressed by high levels of intracellular chloride; in contrast Wnk activation in the evening promotes the activation of the inwardly rectifying potassium channel Irk1 via Fray. Acts as a positive regulator of the canonical Wnt signaling pathway during wing disk development. The protein is Serine/threonine-protein kinase Wnk of Drosophila melanogaster (Fruit fly).